A 286-amino-acid polypeptide reads, in one-letter code: Bifunctional protein FolD (286 aa).

Residues 166-168 (GRS) and serine 191 each bind NADP(+).

The protein belongs to the tetrahydrofolate dehydrogenase/cyclohydrolase family. As to quaternary structure, homodimer.

It carries out the reaction (6R)-5,10-methylene-5,6,7,8-tetrahydrofolate + NADP(+) = (6R)-5,10-methenyltetrahydrofolate + NADPH. The catalysed reaction is (6R)-5,10-methenyltetrahydrofolate + H2O = (6R)-10-formyltetrahydrofolate + H(+). It participates in one-carbon metabolism; tetrahydrofolate interconversion. In terms of biological role, catalyzes the oxidation of 5,10-methylenetetrahydrofolate to 5,10-methenyltetrahydrofolate and then the hydrolysis of 5,10-methenyltetrahydrofolate to 10-formyltetrahydrofolate. In Lactiplantibacillus plantarum (strain ATCC BAA-793 / NCIMB 8826 / WCFS1) (Lactobacillus plantarum), this protein is Bifunctional protein FolD.